The primary structure comprises 171 residues: Phosphopantetheine adenylyltransferase (171 aa).

Residue Thr10 participates in substrate binding. Residues 10–11 (TF) and His18 each bind ATP. The substrate site is built by Lys42, Thr74, and Arg88. ATP is bound by residues 89–91 (GLR), Glu99, and 124–130 (WACLSSK).

It belongs to the bacterial CoaD family. In terms of assembly, homohexamer. Requires Mg(2+) as cofactor.

It is found in the cytoplasm. The enzyme catalyses (R)-4'-phosphopantetheine + ATP + H(+) = 3'-dephospho-CoA + diphosphate. It participates in cofactor biosynthesis; coenzyme A biosynthesis; CoA from (R)-pantothenate: step 4/5. Functionally, reversibly transfers an adenylyl group from ATP to 4'-phosphopantetheine, yielding dephospho-CoA (dPCoA) and pyrophosphate. The chain is Phosphopantetheine adenylyltransferase from Blochmanniella pennsylvanica (strain BPEN).